We begin with the raw amino-acid sequence, 937 residues long: Diacylglycerol kinase theta (937 aa).

The interval 1-48 (MATAAESGARTWPGSGSPRLGSPAGSPVLGISGRARPGSGPERTGRAI) is disordered. 2 positions are modified to phosphoserine: Ser-22 and Ser-26. 3 Phorbol-ester/DAG-type zinc fingers span residues 54–102 (GHSF…KTPC), 115–162 (AHCF…CSDC), and 177–228 (HHHW…TPEC). The disordered stretch occupies residues 359 to 378 (GKAGTTEEETSKDSGPGDSV). One can recognise a Ras-associating domain in the interval 390–489 (TQEILKIYPD…TRFYVAEARA (100 aa)). 2 consecutive short sequence motifs (LXXLL motif) follow at residues 550–554 (LYMLA) and 569–573 (LPDVL). In terms of domain architecture, DAGKc spans 579–716 (PDCCPLLVFV…MDRWTILLDA (138 aa)). A disordered region spans residues 911 to 937 (AKQKPRKAGAIRDTRVDTLPAPEGNPL).

Belongs to the eukaryotic diacylglycerol kinase family. Interacts with RHOA (constitutively activated, GTP-bound); the interaction inhibits DGKQ. Interacts with PRKCE. Interacts with PRKCH. Interacts with PLCB1. Interacts with NR5A1; the interaction requires both LXXLL motifs in DGKQ and is required for full phosphatidic acid-mediated activation of NR5A1. Phosphorylated by PRKCE and PRKCH in vitro. Widely expressed with higher expression in the brain and, to a lesser extent, in the small intestine, duodenum, and liver. In brain, expressed in gray matter. Expression is most intense in the cerebellar cortex and hippocampus, while moderate expression is seen in the olfactory bulb neuronal layers and brain stem nuclei. In the cerebellar cortex, equally expressed in both the Purkinje cell somata and the granule cells.

It is found in the cytoplasm. The protein localises to the cytosol. Its subcellular location is the cell membrane. It localises to the synapse. The protein resides in the cytoskeleton. It is found in the nucleus. The protein localises to the nucleus speckle. Its subcellular location is the nucleus matrix. The catalysed reaction is a 1,2-diacyl-sn-glycerol + ATP = a 1,2-diacyl-sn-glycero-3-phosphate + ADP + H(+). The enzyme catalyses a 1-O-alkyl-sn-glycerol + ATP = a 1-O-alkyl-sn-glycero-3-phosphate + ADP + H(+). It carries out the reaction 1-O-alkyl-2-acyl-sn-glycerol + ATP = 1-O-alkyl-2-acyl-sn-glycero-3-phosphate + ADP + H(+). It catalyses the reaction 1,2-di-(9Z-octadecenoyl)-sn-glycerol + ATP = 1,2-di-(9Z-octadecenoyl)-sn-glycero-3-phosphate + ADP + H(+). The catalysed reaction is 1-O-hexadecyl-sn-glycerol + ATP = 1-O-hexadecyl-sn-glycero-3-phosphate + ADP + H(+). The enzyme catalyses 1-O-hexadecyl-2-acetyl-sn-glycerol + ATP = 1-O-hexadecyl-2-acetyl-sn-glycero-3-phosphate + ADP + H(+). It carries out the reaction 1-octadecanoyl-2-(5Z,8Z,11Z,14Z-eicosatetraenoyl)-sn-glycerol + ATP = 1-octadecanoyl-2-(5Z,8Z,11Z,14Z-eicosatetraenoyl)-sn-glycero-3-phosphate + ADP + H(+). The protein operates within lipid metabolism; glycerolipid metabolism. Its activity is regulated as follows. Activated by phosphatidylserine. Functionally, diacylglycerol kinase that converts diacylglycerol/DAG into phosphatidic acid/phosphatidate/PA and regulates the respective levels of these two bioactive lipids. Thereby, acts as a central switch between the signaling pathways activated by these second messengers with different cellular targets and opposite effects in numerous biological processes. Within the adrenocorticotropic hormone signaling pathway, produces phosphatidic acid which in turn activates NR5A1 and subsequent steroidogenic gene transcription. Also functions downstream of the nerve growth factor signaling pathway being specifically activated in the nucleus by the growth factor. Through its diacylglycerol activity also regulates synaptic vesicle endocytosis. This Rattus norvegicus (Rat) protein is Diacylglycerol kinase theta.